A 350-amino-acid polypeptide reads, in one-letter code: Neurogenic differentiation factor 1 (350 aa).

The disordered stretch occupies residues 1 to 91 (MTKSYSEESM…KKKKMTKARM (91 aa)). Low complexity predominate over residues 7–18 (EESMMLESQSSS). The span at 22–38 (DKCHSSSQDERDVDKTS) shows a compositional bias: basic and acidic residues. Residues 44-72 (DMEDDDDAGLNRLEDEDDEEEEEEEEDGD) are compositionally biased toward acidic residues. Residues 76 to 91 (PKRRGPKKKKMTKARM) are compositionally biased toward basic residues. The Nuclear localization signal signature appears at 82–88 (KKKKMTK). One can recognise a bHLH domain in the interval 96–148 (MRRMKANARERNRMHGLNDALESLRKVVPCYSKTQKLSKIETLRLAKNYIWAL).

Efficient DNA binding requires dimerization with another bHLH protein. As to expression, in the embryo, expressed broadly in a subset of primary neurons in the brain and spinal cord. At 28 hours post-fertilization (hpf), regions of expression include telencephalon, olfactory placode, epiphysis, cranial ganglia, acoustic ganglia, Rohon-Beard mechano-sensory neurons and motoneurons. In 2 day postembryonic brain, expressed in many brain regions but absent from subpallium, the ventral preoptic region, ventral thalamus and hypothalamus; sites of expression extend laterally from the ventricular proliferative regions and correspond to freshly determined cell populations. In adult, expressed in all tissues examined with highest levels in brain.

It localises to the cytoplasm. The protein resides in the nucleus. Its function is as follows. May act as a transcriptional activator. Differentiation factor required for neurogenesis. Acts as an upstream activator of isl1. This chain is Neurogenic differentiation factor 1, found in Danio rerio (Zebrafish).